A 411-amino-acid polypeptide reads, in one-letter code: Chorismate synthase (411 aa).

2 residues coordinate NADP(+): R40 and R46. Residues 135–137 and 256–257 each bind FMN; these read RAS and QA. The interval 278–299 is disordered; sequence HDGIARGADGRPRRTSDRAGGI. Residues 285–294 show a composition bias toward basic and acidic residues; sequence ADGRPRRTSD. FMN is bound by residues A301, 316–320, and R342; that span reads KPIAT.

It belongs to the chorismate synthase family. As to quaternary structure, homotetramer. FMNH2 serves as cofactor.

It carries out the reaction 5-O-(1-carboxyvinyl)-3-phosphoshikimate = chorismate + phosphate. The protein operates within metabolic intermediate biosynthesis; chorismate biosynthesis; chorismate from D-erythrose 4-phosphate and phosphoenolpyruvate: step 7/7. Catalyzes the anti-1,4-elimination of the C-3 phosphate and the C-6 proR hydrogen from 5-enolpyruvylshikimate-3-phosphate (EPSP) to yield chorismate, which is the branch point compound that serves as the starting substrate for the three terminal pathways of aromatic amino acid biosynthesis. This reaction introduces a second double bond into the aromatic ring system. This chain is Chorismate synthase, found in Micrococcus luteus (strain ATCC 4698 / DSM 20030 / JCM 1464 / CCM 169 / CCUG 5858 / IAM 1056 / NBRC 3333 / NCIMB 9278 / NCTC 2665 / VKM Ac-2230) (Micrococcus lysodeikticus).